Here is a 496-residue protein sequence, read N- to C-terminus: MSKKEEKTKVRLPRGFVDRTSAQLHALETMIAQIHEVYESYGFEALETPIFEYTDVLGKFLPDSDRPNAGVFSLQDEDEQWMSLRYDLTAPLARYFAENFEILPKPYRSYRSGFVFRNEKPGPGRFRQFMQLDADIVGSSTVAADAEICMMAADSLERLGIQRHDYVIRLSNRKILDGVLELIGLQGDEQAEKRLTILRAIDKFDKFGMEGVRLLLGKGRLDESGDFTKGAGLSQQESEPILSLISVGAETAEATLDNLKNIVGHTIRGLEGIHELEEMQTIFSKNGYQDRIKIDPSVVRGLDYYTGPVFEAELLFDVLNEEGQKVVFGSVGGGGRYDGLVARFRDEAVPATGFSVGVSRLMAALHNLGKCPVKKTVGPVVVLMMDKDPEYVAYYQKMVMQLRHAGIRSELYLGAAGIKAQMKYADRRHAPCVVIQGASERQEGKVQIKDLIEGARLSAEIKDNQTWRESRPAQIMVDENQLVQAVQEILVAHQFL.

This sequence belongs to the class-II aminoacyl-tRNA synthetase family. In terms of assembly, homodimer.

The protein localises to the cytoplasm. It catalyses the reaction tRNA(His) + L-histidine + ATP = L-histidyl-tRNA(His) + AMP + diphosphate + H(+). In Bartonella bacilliformis (strain ATCC 35685 / KC583 / Herrer 020/F12,63), this protein is Histidine--tRNA ligase.